Reading from the N-terminus, the 326-residue chain is Flap endonuclease 1 (326 aa).

The interval 1–100 (MGNADLRSLA…DEVEKRREQR (100 aa)) is N-domain. Mg(2+) is bound by residues Asp-28, Asp-82, Glu-154, Glu-156, Asp-175, Asp-177, and Asp-225. Positions 118-246 (RVAKLDSRTQ…TAVKDLHEHG (129 aa)) are I-domain. Positions 318–326 (VQTGLDRWA) are interaction with PCNA.

The protein belongs to the XPG/RAD2 endonuclease family. FEN1 subfamily. In terms of assembly, interacts with PCNA. PCNA stimulates the nuclease activity without altering cleavage specificity. Requires Mg(2+) as cofactor.

In terms of biological role, structure-specific nuclease with 5'-flap endonuclease and 5'-3' exonuclease activities involved in DNA replication and repair. During DNA replication, cleaves the 5'-overhanging flap structure that is generated by displacement synthesis when DNA polymerase encounters the 5'-end of a downstream Okazaki fragment. Binds the unpaired 3'-DNA end and kinks the DNA to facilitate 5' cleavage specificity. Cleaves one nucleotide into the double-stranded DNA from the junction in flap DNA, leaving a nick for ligation. Also involved in the base excision repair (BER) pathway. Acts as a genome stabilization factor that prevents flaps from equilibrating into structures that lead to duplications and deletions. Also possesses 5'-3' exonuclease activity on nicked or gapped double-stranded DNA. The protein is Flap endonuclease 1 of Haloarcula marismortui (strain ATCC 43049 / DSM 3752 / JCM 8966 / VKM B-1809) (Halobacterium marismortui).